The following is a 619-amino-acid chain: Probable ATP-dependent RNA helicase DDX59 (619 aa).

The tract at residues methionine 1–proline 101 is disordered. Positions serine 12 to proline 27 are enriched in basic and acidic residues. Lysine 26 participates in a covalent cross-link: Glycyl lysine isopeptide (Lys-Gly) (interchain with G-Cter in SUMO2). Residues alanine 59–glycine 76 are compositionally biased toward polar residues. The residue at position 64 (serine 64) is a Phosphoserine. Basic and acidic residues predominate over residues glutamate 79 to valine 91. The segment at glycine 104–alanine 133 adopts an HIT-type zinc-finger fold. Phosphoserine is present on serine 160. The short motif at isoleucine 203–methionine 231 is the Q motif element. Residues isoleucine 234 to isoleucine 405 enclose the Helicase ATP-binding domain. Alanine 247–threonine 254 is a binding site for ATP. The short motif at aspartate 353 to aspartate 356 is the DEAD box element. The Helicase C-terminal domain occupies serine 416 to proline 579. Positions glutamate 583–glutamine 594 are enriched in basic and acidic residues. The disordered stretch occupies residues glutamate 583–alanine 603.

It belongs to the DEAD box helicase family. DDX59 subfamily. Interacts (via HIT-type zinc finger) with the RUVBL1/RUVBL2 complex in the presence of ADP.

It localises to the cytoplasm. Its subcellular location is the nucleus. The catalysed reaction is ATP + H2O = ADP + phosphate + H(+). This chain is Probable ATP-dependent RNA helicase DDX59 (Ddx59), found in Mus musculus (Mouse).